The sequence spans 151 residues: UPF0178 protein YaiI (151 aa).

The protein belongs to the UPF0178 family.

This Salmonella paratyphi B (strain ATCC BAA-1250 / SPB7) protein is UPF0178 protein YaiI.